The primary structure comprises 386 residues: Ovalbumin (386 aa).

N-acetylglycine is present on G2. The not cleaved signal peptide spans 22 to 48 (HHANENIFYSPFTIISALAMVYLGAKD). S69 bears the Phosphoserine mark. C74 and C121 form a disulfide bridge. N-linked (GlcNAc...) asparagine glycans are attached at residues N293 and N312. Residue S345 is modified to Phosphoserine. The N-linked (GlcNAc...) asparagine glycan is linked to N372.

It belongs to the serpin family. Ov-serpin subfamily. The signal sequence is not cleaved. The functional signal for membrane translocation of ovalbumin becomes accessible when the nascent chain is 50 to 60 residues long. The hydrophobic sequence which lies between residues 27 and 43 folds back on the preceding residues to form an amphipathic hairpin structure which is the signal element recognized by the membrane. Major protein of egg white.

The protein resides in the secreted. Storage protein of egg white. Lack protease inhibitory activity. The polypeptide is Ovalbumin (SERPINB14) (Meleagris gallopavo (Wild turkey)).